The following is a 101-amino-acid chain: MAKVGMRERELKREKTVAKYAEKRAALKAIIANPNVSDEERWEAQMKLQKLPRDASPSRLRNRCQVTGRPHAVLRKFRLSRIKLREAAMRGDVPGLKKASW.

The protein belongs to the universal ribosomal protein uS14 family. As to quaternary structure, part of the 30S ribosomal subunit. Contacts proteins S3 and S10.

Binds 16S rRNA, required for the assembly of 30S particles and may also be responsible for determining the conformation of the 16S rRNA at the A site. The sequence is that of Small ribosomal subunit protein uS14 from Hahella chejuensis (strain KCTC 2396).